The chain runs to 69 residues: Pleurain-A2 (69 aa).

The signal sequence occupies residues 1 to 22 (MFTLKKTLLLLYFLGTISISLC). The propeptide occupies 23-43 (KQERDADEDDGRKMTEEEVKR). C63 and C69 are oxidised to a cystine.

As to expression, expressed by the skin glands.

It localises to the secreted. Antimicrobial peptide. Has activity against the Gram-positive bacterium S.aureus ATCC2592 (MIC=15 ug/ml), the Gram-negative bacteria E.coli ATCC25922 (MIC=60 ug/ml), B.dysenteriae (MIC=60 ug/ml), H.pylori NTCT11637 (MIC=30 ug/ml), and the fungus C.albicans ATCC2002 (MIC=30 ug/ml). Has little hemolytic activity on rabbit red blood cells. The protein is Pleurain-A2 of Nidirana pleuraden (Yunnan pond frog).